The following is a 227-amino-acid chain: Isopentenyl-diphosphate delta-isomerase 2 (227 aa).

Position 36 (K36) interacts with substrate. The Mg(2+) site is built by H40 and H51. Residues 49 to 199 (LLHRAFSVVL…EVKVTPWLRT (151 aa)) form the Nudix hydrolase domain. Positions 70 and 74 each coordinate substrate. Residue S86 is part of the active site. Residue S87 coordinates substrate. Mg(2+) is bound by residues E146 and E148. E148 is a catalytic residue. Residues 225 to 227 (HRV) carry the Microbody targeting signal motif.

The protein belongs to the IPP isomerase type 1 family. The cofactor is Mg(2+). As to expression, muscle-specific expression.

It is found in the peroxisome. It catalyses the reaction isopentenyl diphosphate = dimethylallyl diphosphate. Its pathway is isoprenoid biosynthesis; dimethylallyl diphosphate biosynthesis; dimethylallyl diphosphate from isopentenyl diphosphate: step 1/1. Functionally, catalyzes the 1,3-allylic rearrangement of the homoallylic substrate isopentenyl (IPP) to its highly electrophilic allylic isomer, dimethylallyl diphosphate (DMAPP). This chain is Isopentenyl-diphosphate delta-isomerase 2 (IDI2), found in Homo sapiens (Human).